Consider the following 234-residue polypeptide: Cysteine proteinase inhibitor 6 (234 aa).

Residues 1 to 24 (MMRSRFLLFIVFFSLSLFISSLIA) form the signal peptide. Met-2 carries the N-acetylalanine modification. Cystatin domains are found at residues 38–126 (GGVG…KPAS) and 145–215 (SGWR…FKVE). The Secondary area of contact signature appears at 82–86 (QVVAG). The tract at residues 133–154 (SSDLGCKQGEHESGWREVPGDD) is disordered. Basic and acidic residues predominate over residues 140–154 (QGEHESGWREVPGDD). A Phosphoserine modification is found at Ser-174.

The protein belongs to the cystatin family. Phytocystatin subfamily.

Its subcellular location is the secreted. Specific inhibitor of cysteine proteinases. Probably involved in the regulation of endogenous processes and in defense against pests and pathogens. This is Cysteine proteinase inhibitor 6 (CYS6) from Arabidopsis thaliana (Mouse-ear cress).